The following is a 286-amino-acid chain: Pantothenate synthetase (286 aa).

Position 30–37 (30–37) interacts with ATP; that stretch reads MGNLHSGH. The active-site Proton donor is His-37. Gln-61 contacts (R)-pantoate. Position 61 (Gln-61) interacts with beta-alanine. 149–152 provides a ligand contact to ATP; sequence GQKD. A (R)-pantoate-binding site is contributed by Gln-155. Residues Val-178 and 186–189 contribute to the ATP site; that span reads LSSR.

This sequence belongs to the pantothenate synthetase family. In terms of assembly, homodimer.

The protein localises to the cytoplasm. It carries out the reaction (R)-pantoate + beta-alanine + ATP = (R)-pantothenate + AMP + diphosphate + H(+). The protein operates within cofactor biosynthesis; (R)-pantothenate biosynthesis; (R)-pantothenate from (R)-pantoate and beta-alanine: step 1/1. Functionally, catalyzes the condensation of pantoate with beta-alanine in an ATP-dependent reaction via a pantoyl-adenylate intermediate. The protein is Pantothenate synthetase of Pseudomonas fluorescens (strain ATCC BAA-477 / NRRL B-23932 / Pf-5).